We begin with the raw amino-acid sequence, 453 residues long: Bifunctional protein GlmU (453 aa).

The interval 1-227 (MTQLSVVILA…LMEVEGANNR (227 aa)) is pyrophosphorylase. UDP-N-acetyl-alpha-D-glucosamine is bound by residues 9–12 (LAAG), K23, Q74, 79–80 (GT), 101–103 (YGD), G138, E152, N167, and N225. D103 is a binding site for Mg(2+). N225 lines the Mg(2+) pocket. The tract at residues 228-248 (LQLAALERYYQKIQAEKLLLA) is linker. The tract at residues 249-453 (GVTIIDPARF…IQGWQRPTKK (205 aa)) is N-acetyltransferase. Residues R331 and K349 each coordinate UDP-N-acetyl-alpha-D-glucosamine. Catalysis depends on H361, which acts as the Proton acceptor. Residues Y364 and N375 each contribute to the UDP-N-acetyl-alpha-D-glucosamine site. Acetyl-CoA is bound by residues A378, 384-385 (NY), S403, A421, and R438.

It in the N-terminal section; belongs to the N-acetylglucosamine-1-phosphate uridyltransferase family. In the C-terminal section; belongs to the transferase hexapeptide repeat family. Homotrimer. Requires Mg(2+) as cofactor.

The protein localises to the cytoplasm. The enzyme catalyses alpha-D-glucosamine 1-phosphate + acetyl-CoA = N-acetyl-alpha-D-glucosamine 1-phosphate + CoA + H(+). It carries out the reaction N-acetyl-alpha-D-glucosamine 1-phosphate + UTP + H(+) = UDP-N-acetyl-alpha-D-glucosamine + diphosphate. The protein operates within nucleotide-sugar biosynthesis; UDP-N-acetyl-alpha-D-glucosamine biosynthesis; N-acetyl-alpha-D-glucosamine 1-phosphate from alpha-D-glucosamine 6-phosphate (route II): step 2/2. It functions in the pathway nucleotide-sugar biosynthesis; UDP-N-acetyl-alpha-D-glucosamine biosynthesis; UDP-N-acetyl-alpha-D-glucosamine from N-acetyl-alpha-D-glucosamine 1-phosphate: step 1/1. Its pathway is bacterial outer membrane biogenesis; LPS lipid A biosynthesis. Functionally, catalyzes the last two sequential reactions in the de novo biosynthetic pathway for UDP-N-acetylglucosamine (UDP-GlcNAc). The C-terminal domain catalyzes the transfer of acetyl group from acetyl coenzyme A to glucosamine-1-phosphate (GlcN-1-P) to produce N-acetylglucosamine-1-phosphate (GlcNAc-1-P), which is converted into UDP-GlcNAc by the transfer of uridine 5-monophosphate (from uridine 5-triphosphate), a reaction catalyzed by the N-terminal domain. The sequence is that of Bifunctional protein GlmU from Glaesserella parasuis serovar 5 (strain SH0165) (Haemophilus parasuis).